Here is a 359-residue protein sequence, read N- to C-terminus: Doublesex- and mab-3-related transcription factor B1 (359 aa).

Residues 7–54 (CSRCRNHGYLVPVKGHTGKCRWKQCICDKCYLITERQKIMAAQKVLRT) constitute a DNA-binding region (DM). Disordered regions lie at residues 111 to 149 (PPQA…RDRS) and 262 to 359 (SGLV…EQSN). Composition is skewed to pro residues over residues 277 to 299 (CSPP…PQPQ) and 315 to 325 (LPPPPPPPSPP). Over residues 348 to 359 (EPSQDSPQEQSN) the composition is skewed to polar residues.

The protein belongs to the DMRT family. In terms of tissue distribution, brain.

The protein resides in the nucleus. In Mus musculus (Mouse), this protein is Doublesex- and mab-3-related transcription factor B1 (Dmrtb1).